Here is a 374-residue protein sequence, read N- to C-terminus: MLHFLIRPSTRCAGSPHFNSTSSFLRKRLQSKTILSKRLGFQFRPSSTNVLAEVSTATSGFNPSWWPYALIQNTAYTINVYAGAPWWVSIILTTLGVRLALTPVMIASFRNSTKLSVIQPEMKKELEAIKTAKLDNDQLALNQHSIALRGIYLKHNVNPFAIFILPLTQSAVFFSFFYAIRKMSRLSVDGFTTGGLAWFKDLSIPDPYCILPIINAGLMFSGMQMNRANTASTIGNSTNWRTFFFLCCLLSPLLTAKLPAAIFMYWIPSSLFNIVQGYILKNPVVRSKLGFAPLPSIIEKQPSGFTLITNPIKSLKEFYKGVRDGFKTQYEQLQKDVSRRAVATTSASTIRPNSHYKKLKELNRSKKNSKKQSN.

Residues 77 to 97 (TINVYAGAPWWVSIILTTLGV) form a helical membrane-spanning segment. Residues 98–159 (RLALTPVMIA…GIYLKHNVNP (62 aa)) are Mitochondrial intermembrane-facing. Residues 160–180 (FAIFILPLTQSAVFFSFFYAI) form a helical membrane-spanning segment. The Mitochondrial matrix segment spans residues 181 to 242 (RKMSRLSVDG…TIGNSTNWRT (62 aa)). A helical membrane pass occupies residues 243–263 (FFFLCCLLSPLLTAKLPAAIF). Residues 264 to 374 (MYWIPSSLFN…SKKNSKKQSN (111 aa)) lie on the Mitochondrial intermembrane side of the membrane.

It belongs to the OXA1/ALB3/YidC family.

The protein resides in the mitochondrion inner membrane. Functionally, required for the insertion of integral membrane proteins into the mitochondrial inner membrane. Essential for the activity and assembly of cytochrome c oxidase. Not essential for viability, while oxa102 is essential. When both genes are deleted the cell is non-viable, suggesting that oxa101 act as a back-up for oxa102. The protein is Mitochondrial inner membrane protein oxa1-1 (oxa101) of Schizosaccharomyces pombe (strain 972 / ATCC 24843) (Fission yeast).